The chain runs to 303 residues: Oxygen-dependent coproporphyrinogen-III oxidase (303 aa).

A substrate-binding site is contributed by Ser93. His97 and His107 together coordinate a divalent metal cation. Catalysis depends on His107, which acts as the Proton donor. Residue 109-111 participates in substrate binding; that stretch reads NVR. Residues His149 and His179 each coordinate a divalent metal cation. The tract at residues 244–279 is important for dimerization; the sequence is YVEFNLVFDRGTLFGLQSGGRTESILLSMPPLAQWR. 262–264 lines the substrate pocket; sequence GGR.

It belongs to the aerobic coproporphyrinogen-III oxidase family. In terms of assembly, homodimer. The cofactor is a divalent metal cation.

The protein resides in the cytoplasm. It catalyses the reaction coproporphyrinogen III + O2 + 2 H(+) = protoporphyrinogen IX + 2 CO2 + 2 H2O. Its pathway is porphyrin-containing compound metabolism; protoporphyrin-IX biosynthesis; protoporphyrinogen-IX from coproporphyrinogen-III (O2 route): step 1/1. Functionally, involved in the heme biosynthesis. Catalyzes the aerobic oxidative decarboxylation of propionate groups of rings A and B of coproporphyrinogen-III to yield the vinyl groups in protoporphyrinogen-IX. This Bordetella pertussis (strain Tohama I / ATCC BAA-589 / NCTC 13251) protein is Oxygen-dependent coproporphyrinogen-III oxidase.